Here is a 371-residue protein sequence, read N- to C-terminus: Carnitine monooxygenase oxygenase subunit (371 aa).

The 109-residue stretch at 44–152 folds into the Rieske domain; the sequence is WICVAHGSEL…VEEYAGFVFI (109 aa). [2Fe-2S] cluster contacts are provided by Cys86, His88, Cys106, and His109. 3 residues coordinate Fe cation: His208, His213, and Asp323.

Belongs to the bacterial ring-hydroxylating dioxygenase alpha subunit family. CntA subfamily. As to quaternary structure, composed of an oxygenase subunit and a reductase subunit. The cofactor is [2Fe-2S] cluster. It depends on Fe cation as a cofactor.

It carries out the reaction (R)-carnitine + NADH + O2 + H(+) = (3R)-3-hydroxy-4-oxobutanoate + trimethylamine + NAD(+) + H2O. The catalysed reaction is (R)-carnitine + NADPH + O2 + H(+) = (3R)-3-hydroxy-4-oxobutanoate + trimethylamine + NADP(+) + H2O. The protein operates within amine and polyamine metabolism; carnitine metabolism. Inhibited by EDTA. Its function is as follows. Converts carnitine to trimethylamine and malic semialdehyde. Acts on both enantiomers. This is Carnitine monooxygenase oxygenase subunit from Acinetobacter pittii (strain PHEA-2).